The following is a 416-amino-acid chain: Tryptophan synthase beta chain (416 aa).

The residue at position 109 (lysine 109) is an N6-(pyridoxal phosphate)lysine.

Belongs to the TrpB family. As to quaternary structure, tetramer of two alpha and two beta chains. Pyridoxal 5'-phosphate is required as a cofactor.

The catalysed reaction is (1S,2R)-1-C-(indol-3-yl)glycerol 3-phosphate + L-serine = D-glyceraldehyde 3-phosphate + L-tryptophan + H2O. The protein operates within amino-acid biosynthesis; L-tryptophan biosynthesis; L-tryptophan from chorismate: step 5/5. Functionally, the beta subunit is responsible for the synthesis of L-tryptophan from indole and L-serine. In Synechococcus sp. (strain WH7803), this protein is Tryptophan synthase beta chain.